Consider the following 693-residue polypeptide: Elongation factor G (693 aa).

One can recognise a tr-type G domain in the interval 7 to 282; that stretch reads EKIRNIGITA…SVIDYLPAPT (276 aa). GTP is bound by residues 16-23, 80-84, and 134-137; these read AHIDAGKT, DTPGH, and NKLD.

This sequence belongs to the TRAFAC class translation factor GTPase superfamily. Classic translation factor GTPase family. EF-G/EF-2 subfamily.

The protein localises to the cytoplasm. In terms of biological role, catalyzes the GTP-dependent ribosomal translocation step during translation elongation. During this step, the ribosome changes from the pre-translocational (PRE) to the post-translocational (POST) state as the newly formed A-site-bound peptidyl-tRNA and P-site-bound deacylated tRNA move to the P and E sites, respectively. Catalyzes the coordinated movement of the two tRNA molecules, the mRNA and conformational changes in the ribosome. The polypeptide is Elongation factor G (Granulibacter bethesdensis (strain ATCC BAA-1260 / CGDNIH1)).